A 282-amino-acid chain; its full sequence is Chlorite dismutase (282 aa).

Positions 1–31 (MTNLSIHNFKLSLVAAVIGSAMVMTSSPVAA) are cleaved as a signal peptide. Glutamate 104 lines the Ca(2+) pocket. Histidine 204 serves as a coordination point for heme. Arginine 217 functions as the Proton acceptor in the catalytic mechanism. The Ca(2+) site is built by aspartate 226 and threonine 265.

It belongs to the chlorite dismutase family. As to quaternary structure, homopentamer. Requires heme b as cofactor.

The protein resides in the periplasm. It catalyses the reaction chloride + O2 = chlorite. Functionally, catalyzes the heme-dependent decomposition of chlorite to O(2) and chloride with high efficiency and specificity. Used to detoxify chlorite, a by-product of the reduction of perchlorate, a primarily anthropogenic pollutant, in perchlorate-respiring bacteria. In Dechloromonas aromatica (strain RCB), this protein is Chlorite dismutase.